The sequence spans 304 residues: Aquaglyceroporin-3 (304 aa).

At 1–68 the chain is on the cytoplasmic side; sequence MQSQPDNVAY…LRLNYRDYMG (68 aa). Residues 69–89 form a helical membrane-spanning segment; that stretch reads ELLGTFVLLFMGNGVVATVII. Residues 90–95 lie on the Extracellular side of the membrane; the sequence is DGKLGF. Residues 96 to 116 form a helical membrane-spanning segment; it reads LSITLGWGIAVTMALYVSLGI. At 117-142 the chain is on the cytoplasmic side; that stretch reads SSGHLNPAVTVGNAVFGDFPWRKVPG. The helical transmembrane segment at 143–163 threads the bilayer; sequence YIAAQMLGAFLGAACAYGVFA. Residues 164–196 lie on the Extracellular side of the membrane; it reads DLLKAHGGGELIAFGEKGTAGVFSTYPRDSNGL. Residues 197-217 form a helical membrane-spanning segment; it reads FSCIFGEFICTAMLLFCVCGI. Residues 218–231 are Cytoplasmic-facing; that stretch reads FDPNNSPAKGHEPL. Residues 232–252 form a helical membrane-spanning segment; the sequence is AVGALVFAIGNNIGYSTGYAI. Over 253–277 the chain is Extracellular; that stretch reads NPARDFGPRVFSSFLYGGEVFSHAN. A helical transmembrane segment spans residues 278-298; sequence YYFWVPLVIPLFGGIFGLFLY. Over 299-304 the chain is Cytoplasmic; it reads KYFVPH.

The protein belongs to the MIP/aquaporin (TC 1.A.8) family.

Its subcellular location is the cell membrane. The enzyme catalyses glycerol(in) = glycerol(out). The catalysed reaction is H2O(in) = H2O(out). It catalyses the reaction urea(in) = urea(out). In terms of biological role, mediates water and glycerol transport across the cell membrane. Permeable to urea. Permeable to methylamine/methylammonium. Permeable to dihydroxyacetone. Permeable to erythritol and ribitol. The sequence is that of Aquaglyceroporin-3 from Trypanosoma brucei brucei.